We begin with the raw amino-acid sequence, 38 residues long: Humanin-like protein (38 aa).

In terms of tissue distribution, in the testis, expressed in Leydig cells at 10, 20 and 60 days of age (at protein level). Also expressed in pachytene spermatocytes at day 20 and in vessels, peritubular cells and spermatids at day 60. Not detected in Sertoli cells (at protein level). In the adult ovary, expressed in stromal cells, granulosa cells, theca cells and oocytes at diestrus and proestrus (at protein level). Expressed in the anterior pituitary where it is detected in lactotropes and somatotropes with lower levels in females than males (at protein level). In the hippocampus, expressed in astrocytes but not in neurons or oligodendrocytes (at protein level). Expressed in muscle, liver and hypothalamus but not in epididymal fat (at protein level). Widely expressed with highest levels in cardiac and skeletal muscle and lowest levels in lung, testis and uterus. In the CNS, levels are relatively high in the cerebellum and cortex and low in the hippocampus. In the hippocampus, lower levels are detected in ovariectomized animals than in controls.

The protein localises to the mitochondrion. The protein resides in the secreted. It is found in the cytoplasm. Plays a role as a neuroprotective factor. Protects against neuronal cell death induced by amyloid-beta peptides. Also protects against excitotoxic cell death. Prevents amyloid-beta peptide-induced spatial learning and memory impairments, protects against amyloid-beta peptide-induced suppression of hippocampal long-term potentiation, and inhibits amyloid-beta peptide-induced activation of STAT3 and inhibition of CASP3. Prevents glutamate-induced dendritic atrophy in hippocampal neurons and also prevents glutamate-induced decrease in SYP puncta number and total puncta area. Protects anterior pituitary cells from TNF-induced apoptosis. Plays a role in ovarian follicle development by acting as a cryoprotective factor for granulosa cells in the antral follicle. Increases androgen production in Leydig cells and promotes Leydig cell survival by preventing apoptosis. This Rattus norvegicus (Rat) protein is Humanin-like protein.